The chain runs to 184 residues: MNWQSERIWIELITGSRKTSNFCWACILFLGSLGFLLVGTSSYLGRNLISLFPSQQILFFPQGIVMSFYGIAGLFISSYLWCTISWNVGSGYDLFDRKEGIVCIFRWGFPGINRRIFLRFLMRDIQSIRMEVKEGLYPRRVLYMEIRGQGAIPLTRTDENFTPREIEQKAAESAYFLRVPIEVF.

2 helical membrane-spanning segments follow: residues 22–42 (FCWA…GTSS) and 57–77 (ILFF…LFIS).

It belongs to the Ycf4 family.

The protein localises to the plastid. Its subcellular location is the chloroplast thylakoid membrane. Its function is as follows. Seems to be required for the assembly of the photosystem I complex. This is Photosystem I assembly protein Ycf4 from Liriodendron tulipifera (Tuliptree).